A 548-amino-acid chain; its full sequence is Probable bifunctional tRNA threonylcarbamoyladenosine biosynthesis protein (548 aa).

Residues 1–338 (MRILGIEGTA…FRPDEVAVTW (338 aa)) are kae1. Residues His-122 and His-126 each coordinate Fe cation. L-threonylcarbamoyladenylate contacts are provided by residues 143 to 147 (NASGA), Asp-175, Gly-188, Glu-192, and Asn-271. Asp-299 contributes to the Fe cation binding site. Residues 349–548 (RMGGDEVQGA…DDIEGRGRYQ (200 aa)) enclose the Protein kinase domain. ATP-binding positions include 355 to 362 (VQGAEATV) and Lys-371. Basic and acidic residues predominate over residues 390 to 404 (ERTRQEARLTSEARR). The disordered stretch occupies residues 390-413 (ERTRQEARLTSEARRNGVPTPLVR). Asp-460 serves as the catalytic Proton acceptor; for kinase activity.

It in the N-terminal section; belongs to the KAE1 / TsaD family. The protein in the C-terminal section; belongs to the protein kinase superfamily. Tyr protein kinase family. BUD32 subfamily. Component of the KEOPS complex that consists of Kae1, Bud32, Cgi121 and Pcc1; the whole complex dimerizes. Fe(2+) serves as cofactor.

Its subcellular location is the cytoplasm. The enzyme catalyses L-seryl-[protein] + ATP = O-phospho-L-seryl-[protein] + ADP + H(+). It catalyses the reaction L-threonyl-[protein] + ATP = O-phospho-L-threonyl-[protein] + ADP + H(+). It carries out the reaction L-threonylcarbamoyladenylate + adenosine(37) in tRNA = N(6)-L-threonylcarbamoyladenosine(37) in tRNA + AMP + H(+). Its function is as follows. Required for the formation of a threonylcarbamoyl group on adenosine at position 37 (t(6)A37) in tRNAs that read codons beginning with adenine. Is a component of the KEOPS complex that is probably involved in the transfer of the threonylcarbamoyl moiety of threonylcarbamoyl-AMP (TC-AMP) to the N6 group of A37. The Kae1 domain likely plays a direct catalytic role in this reaction. The Bud32 domain probably displays kinase activity that regulates Kae1 function. This chain is Probable bifunctional tRNA threonylcarbamoyladenosine biosynthesis protein, found in Haloarcula marismortui (strain ATCC 43049 / DSM 3752 / JCM 8966 / VKM B-1809) (Halobacterium marismortui).